The following is a 265-amino-acid chain: 3-methyl-2-oxobutanoate hydroxymethyltransferase (265 aa).

Positions 43 and 82 each coordinate Mg(2+). 3-methyl-2-oxobutanoate is bound by residues 43–44 (DS), Asp-82, and Lys-111. Position 113 (Glu-113) interacts with Mg(2+). Glu-180 acts as the Proton acceptor in catalysis.

It belongs to the PanB family. As to quaternary structure, homodecamer; pentamer of dimers. Mg(2+) is required as a cofactor.

Its subcellular location is the cytoplasm. It catalyses the reaction 3-methyl-2-oxobutanoate + (6R)-5,10-methylene-5,6,7,8-tetrahydrofolate + H2O = 2-dehydropantoate + (6S)-5,6,7,8-tetrahydrofolate. It functions in the pathway cofactor biosynthesis; (R)-pantothenate biosynthesis; (R)-pantoate from 3-methyl-2-oxobutanoate: step 1/2. In terms of biological role, catalyzes the reversible reaction in which hydroxymethyl group from 5,10-methylenetetrahydrofolate is transferred onto alpha-ketoisovalerate to form ketopantoate. This is 3-methyl-2-oxobutanoate hydroxymethyltransferase from Francisella tularensis subsp. holarctica (strain OSU18).